A 75-amino-acid chain; its full sequence is Kappa-scoloptoxin(03)-Ssm1d (75 aa).

The first 23 residues, 1–23, serve as a signal peptide directing secretion; sequence MKLSMAILLVMALIIFTLDKNYS.

This sequence belongs to the scoloptoxin-03 family. In terms of processing, contains 3 disulfide bonds. As to expression, expressed by the venom gland.

The protein resides in the secreted. In terms of biological role, inhibits voltage-gated potassium channels. The protein is Kappa-scoloptoxin(03)-Ssm1d of Scolopendra mutilans (Chinese red-headed centipede).